Reading from the N-terminus, the 240-residue chain is tRNA1(Val) (adenine(37)-N6)-methyltransferase (240 aa).

It belongs to the methyltransferase superfamily. tRNA (adenine-N(6)-)-methyltransferase family.

The protein localises to the cytoplasm. It carries out the reaction adenosine(37) in tRNA1(Val) + S-adenosyl-L-methionine = N(6)-methyladenosine(37) in tRNA1(Val) + S-adenosyl-L-homocysteine + H(+). In terms of biological role, specifically methylates the adenine in position 37 of tRNA(1)(Val) (anticodon cmo5UAC). This chain is tRNA1(Val) (adenine(37)-N6)-methyltransferase, found in Photobacterium profundum (strain SS9).